The following is a 460-amino-acid chain: Cysteine--tRNA ligase (460 aa).

C28 contributes to the Zn(2+) binding site. A 'HIGH' region motif is present at residues 30–40 (MTVYDYCHLGH). C209, H234, and E238 together coordinate Zn(2+). Residues 266-270 (KMSKS) carry the 'KMSKS' region motif. K269 serves as a coordination point for ATP.

It belongs to the class-I aminoacyl-tRNA synthetase family. In terms of assembly, monomer. Zn(2+) is required as a cofactor.

It is found in the cytoplasm. It carries out the reaction tRNA(Cys) + L-cysteine + ATP = L-cysteinyl-tRNA(Cys) + AMP + diphosphate. This is Cysteine--tRNA ligase from Pseudomonas putida (strain GB-1).